Reading from the N-terminus, the 270-residue chain is Phospholipase A and acyltransferase 5 (270 aa).

Disordered stretches follow at residues 1-54 and 70-122; these read MGLS…SASS and RRLE…NPRP. Composition is skewed to polar residues over residues 24–54 and 100–116; these read TQISKTSSTESSDTQSATGQSTVPHSDSASS and IPTSNSEIESTQKNQAV. The 114-residue stretch at 127–240 folds into the LRAT domain; it reads LIEIFRIGYE…LRYGVPRSQQ (114 aa). Residues His-137 and His-149 contribute to the active site. Catalysis depends on Cys-224, which acts as the Acyl-thioester intermediate.

Belongs to the H-rev107 family. Isoform 4 shows highest expression level in testis.

It localises to the cytoplasm. It is found in the cytosol. The enzyme catalyses a 1,2-diacyl-sn-glycero-3-phosphocholine + H2O = a 1-acyl-sn-glycero-3-phosphocholine + a fatty acid + H(+). It catalyses the reaction a 1,2-diacyl-sn-glycero-3-phosphocholine + H2O = a 2-acyl-sn-glycero-3-phosphocholine + a fatty acid + H(+). The catalysed reaction is 1-hexadecanoyl-2-(5Z,8Z,11Z,14Z-eicosatetraenoyl)-sn-glycero-3-phosphocholine + 1,2-di-(9Z-octadecenoyl)-sn-glycero-3-phosphoethanolamine = N-(5Z,8Z,11Z,14Z-eicosatetraenoyl)-1,2-di-(9Z-octadecenoyl)-sn-glycero-3-phosphoethanolamine + 1-hexadecanoyl-sn-glycero-3-phosphocholine + H(+). It carries out the reaction 1,2-di-(9Z-octadecenoyl)-sn-glycero-3-phosphoethanolamine + 1,2-dihexadecanoyl-sn-glycero-3-phosphocholine = N-hexadecanoyl-1,2-di-(9Z-octadecenoyl)-sn-glycero-3-phosphoethanolamine + 1-hexadecanoyl-sn-glycero-3-phosphocholine + H(+). The enzyme catalyses 1,2-di-(9Z-octadecenoyl)-sn-glycero-3-phosphoethanolamine + 1,2-dihexadecanoyl-sn-glycero-3-phosphocholine = N-hexadecanoyl-1,2-di-(9Z-octadecenoyl)-sn-glycero-3-phosphoethanolamine + 2-hexadecanoyl-sn-glycero-3-phosphocholine + H(+). It catalyses the reaction a 1,2-diacyl-sn-glycero-3-phosphoethanolamine + a 1,2-diacyl-sn-glycero-3-phosphocholine = an N-acyl-1,2-diacyl-sn-glycero-3-phosphoethanolamine + a 1-acyl-sn-glycero-3-phosphocholine + H(+). The catalysed reaction is a 1,2-diacyl-sn-glycero-3-phosphoethanolamine + a 1,2-diacyl-sn-glycero-3-phosphocholine = an N-acyl-1,2-diacyl-sn-glycero-3-phosphoethanolamine + a 2-acyl-sn-glycero-3-phosphocholine + H(+). It carries out the reaction 1-hexadecanoyl-2-(9Z-octadecenoyl)-sn-glycero-3-phosphocholine + 1,2-di-(9Z-octadecenoyl)-sn-glycero-3-phosphoethanolamine = N,1,2-tri-(9Z-octadecenoyl)-sn-glycero-3-phosphoethanolamine + 1-hexadecanoyl-sn-glycero-3-phosphocholine + H(+). Exhibits both phospholipase A1/2 and acyltransferase activities. Shows phospholipase A1 (PLA1) and A2 (PLA2) activity, catalyzing the calcium-independent release of fatty acids from the sn-1 or sn-2 position of glycerophospholipids. Shows N-acyltransferase activity, catalyzing the calcium-independent transfer of a fatty acyl group at the sn-1 position of phosphatidylcholine (PC) and other glycerophospholipids to the primary amine of phosphatidylethanolamine (PE), forming N-acylphosphatidylethanolamine (NAPE), which serves as precursor for N-acylethanolamines (NAEs). The protein is Phospholipase A and acyltransferase 5 of Mus musculus (Mouse).